The chain runs to 541 residues: Catalase (541 aa).

A disordered region spans residues 1–20 (MPQTKGKPHEEQLEQYKNSQ). Residues His-74 and Asn-147 contribute to the active site. Tyr-357 contributes to the heme binding site.

Belongs to the catalase family. Heme is required as a cofactor.

It localises to the peroxisome matrix. The catalysed reaction is 2 H2O2 = O2 + 2 H2O. Its function is as follows. Catalyzes the degradation of hydrogen peroxide (H(2)O(2)) generated by peroxisomal oxidases to water and oxygen, thereby protecting cells from the toxic effects of hydrogen peroxide. The protein is Catalase (CAT) of Ascaris suum (Pig roundworm).